A 155-amino-acid chain; its full sequence is Anaerobic ribonucleoside-triphosphate reductase-activating protein (155 aa).

Residues C26, C30, and C33 each coordinate [4Fe-4S] cluster. Residues G32–Y34 and G74 contribute to the S-adenosyl-L-methionine site.

This sequence belongs to the organic radical-activating enzymes family. In terms of assembly, forms a tetramer composed of two NrdD and two NrdG subunits. [4Fe-4S] cluster is required as a cofactor.

The protein resides in the cytoplasm. The enzyme catalyses glycyl-[protein] + reduced [flavodoxin] + S-adenosyl-L-methionine = glycin-2-yl radical-[protein] + semiquinone [flavodoxin] + 5'-deoxyadenosine + L-methionine + H(+). Functionally, activation of anaerobic ribonucleoside-triphosphate reductase under anaerobic conditions by generation of an organic free radical, using S-adenosylmethionine and reduced flavodoxin as cosubstrates to produce 5'-deoxy-adenosine. The protein is Anaerobic ribonucleoside-triphosphate reductase-activating protein (nrdG) of Vibrio cholerae serotype O1 (strain ATCC 39315 / El Tor Inaba N16961).